Consider the following 290-residue polypeptide: uncharacterized protein (290 aa).

The protein belongs to the UreD family.

Its subcellular location is the cytoplasm. It localises to the nucleus. Probably facilitates nickel incorporation. This is an uncharacterized protein from Schizosaccharomyces pombe (strain 972 / ATCC 24843) (Fission yeast).